We begin with the raw amino-acid sequence, 8384 residues long: Mucin-19 (8384 aa).

The signal sequence occupies residues 1–21; sequence MKLILWYLVVALWCFFKDVEA. Disordered stretches follow at residues 33–197, 222–247, 279–305, and 332–467; these read AASR…YGAG, SKAD…PDAG, GDTG…IDLG, and QEGF…PEAT. 2 stretches are compositionally biased toward low complexity: residues 35–48 and 88–98; these read SRSG…SSSG and GGFFNSSSSSG. Residues 169 to 184 show a composition bias toward basic and acidic residues; it reads DKSRERWDAGNSRSED. The span at 187–197 shows a compositional bias: polar residues; sequence ADSTNTRYGAG. Positions 279 to 299 are enriched in polar residues; sequence GDTGISSKTVEGNQTSSSGGS. A compositionally biased stretch (low complexity) spans 359–369; that stretch reads GSDSSSSGDSS. Residues 370–381 are compositionally biased toward polar residues; it reads ARNGFENSSGIS. Composition is skewed to low complexity over residues 424 to 435 and 443 to 452; these read SDSGGNTWSSDS and TSSSEYSTSG. 3 VWFD domains span residues 478–649, 815–995, and 1274–1447; these read GEIS…QHCN, GRCK…SSCI, and TICH…QECS. 8 disulfide bridges follow: cysteine 502–cysteine 648, cysteine 817–cysteine 952, cysteine 838–cysteine 994, cysteine 857–cysteine 865, cysteine 1276–cysteine 1411, cysteine 1298–cysteine 1446, cysteine 1307–cysteine 1408, and cysteine 1323–cysteine 1330. Disordered stretches follow at residues 1680 to 1699, 1732 to 2464, 2484 to 2526, 2540 to 2827, 2850 to 2917, 2984 to 3027, 3075 to 3368, 3386 to 3428, 3585 to 3628, 3667 to 3736, 4105 to 4147, 4187 to 4251, 4315 to 4390, 4414 to 4455, 4510 to 4583, 4790 to 4843, 4895 to 4930, 5130 to 5161, 5429 to 5452, 5464 to 5494, 5880 to 5918, 6069 to 6403, 6440 to 6918, 6953 to 7223, 7250 to 7749, 7783 to 7975, and 8020 to 8133; these read TSSS…PFTT, AGTT…KSPG, LESE…TEGS, RPLD…MTGT, STVG…LGTI, VTTG…SGTT, GTTG…GKTG, TTRL…GKTG, ETTG…TNGL, GSSA…TGLP, TGSS…NGLS, SAGV…AEVT, GLSA…SARV, TGSS…TNGQ, TGTT…TGLP, SSAG…AGVT, TGTT…GVTG, VTGT…VTGK, GPSA…GTTG, GTSI…SAEM, TGKT…STES, GRAT…ETTK, GTSE…TGFK, SFST…SKTG, KNGS…EAGS, and SGRS…VSQP. Low complexity-rich tracts occupy residues 1732–1746, 1772–1813, and 1820–1833; these read AGTT…TGAA, PGEA…TTGP, and GATS…EGMS. Positions 1835-1860 are enriched in polar residues; that stretch reads VTGQSLGSTAGSDSEITAKTSFTGSS. The segment covering 1868–1879 has biased composition (low complexity); sequence PSPGSPGHFSGG. The span at 1880–1905 shows a compositional bias: polar residues; the sequence is TTEWGNVATTGAAGENTSGALGSTEG. Positions 1909–1921 are enriched in low complexity; that stretch reads ATTSAGSGNTAGT. Positions 1950–1968 are enriched in polar residues; it reads GSSTPGEADIGNTSFGKSG. 2 stretches are compositionally biased toward low complexity: residues 1969 to 1983 and 2013 to 2049; these read TPTV…SPVS and GGKI…SGPS. Over residues 2055–2100 the composition is skewed to polar residues; sequence NYGQSSEIPGTIKSSSDVSGTMGQSDTTSGPSVAVTRTSEQSSGVT. Composition is skewed to low complexity over residues 2132-2147 and 2159-2170; these read TTGS…GPSS and GSGTSGQSVTGS. Composition is skewed to polar residues over residues 2171–2186 and 2209–2225; these read RATG…TVSF and GSGT…TTRL. Low complexity-rich tracts occupy residues 2233–2246 and 2280–2313; these read TESS…TTPS and SGPS…TKPS. Residues 2238–6086 are approximate repeats of G-V-T-G-T-T-G-P-S-A; that stretch reads GVTGTTTPSA…GVTGTTGLSA (3849 aa). 2 stretches are compositionally biased toward polar residues: residues 2316–2332 and 2354–2372; these read RTGT…TTEP and ATES…TTIP. The segment covering 2403-2419 has biased composition (gly residues); sequence SSGGSGATRSSGGGMGT. A compositionally biased stretch (low complexity) spans 2420–2441; that stretch reads TGQSTARSETTGPLFGLTGTFG. A compositionally biased stretch (polar residues) spans 2442–2460; the sequence is QSATVTGTSSNSAGVTTPE. Low complexity-rich tracts occupy residues 2512–2526, 2545–2571, and 2578–2589; these read SAGE…TEGS, GSGT…TTRK, and TTGLSGLTGTSG. 2 stretches are compositionally biased toward polar residues: residues 2595 to 2610 and 2638 to 2653; these read TGTS…TSEK and TRPS…QSAR. A compositionally biased stretch (low complexity) spans 2654-2681; the sequence is VTETVGASAGVTGTTGPSTEGSGATGPS. 2 stretches are compositionally biased toward polar residues: residues 2695–2748 and 2755–2770; these read SGTT…TGTT and TETT…TTGP. Residues 2787-2799 are compositionally biased toward low complexity; sequence ATRSSGGETETTG. Composition is skewed to polar residues over residues 2800 to 2827, 2850 to 2859, and 2874 to 2892; these read QSAV…MTGT, STVGLETTRP, and AQTT…QSAR. The span at 2894 to 2910 shows a compositional bias: low complexity; sequence TGASGPSVGVTGTTGPA. The span at 2984 to 2998 shows a compositional bias: polar residues; that stretch reads VTTGPSVTGVETTAK. Residues 2999-3027 are compositionally biased toward low complexity; the sequence is TTSGGLSTTISSVGGTGTTGQSPERSGTT. Over residues 3099–3109 the composition is skewed to polar residues; sequence PSITGSGTTRP. Low complexity predominate over residues 3114-3130; the sequence is SWTAGTSSGGHSTTSPS. The span at 3131-3159 shows a compositional bias: polar residues; sequence VRGTETTGQSAAESVTTGPVTGYTETSGP. Residues 3172 to 3188 show a composition bias toward low complexity; it reads TVTQTTGSSAAVSGTTV. Polar residues predominate over residues 3189–3224; that stretch reads QSLTVSGTTRPSSGQTEITGSSVKESGTTESSAVRS. Residues 3225-3277 are compositionally biased toward low complexity; sequence GTTGPTAGVTGTNGPSSAGVTGITGSSPGVTGTTGSSPGVTGTTGSSARSGTS. Composition is skewed to polar residues over residues 3303 to 3317 and 3324 to 3362; these read ITGT…TGTT and TGTT…SSAG. Residues 3390 to 3417 show a composition bias toward low complexity; sequence SAGVTGTTGPSPGVTGTTGTPAGVTGTT. Composition is skewed to polar residues over residues 3702–3728 and 4105–4116; these read VTGT…TTGP and TGSSARSGTSIP. Residues 4117–4126 are compositionally biased toward low complexity; the sequence is SVGETGTTRT. Positions 4320 to 4346 are enriched in polar residues; sequence VTGTTRPSAGVTGTTGQSAEVTGTTEP. 2 stretches are compositionally biased toward low complexity: residues 4347 to 4385 and 4414 to 4426; these read SAGL…GTTG and TGSS…STPS. Low complexity-rich tracts occupy residues 5469-5494 and 5889-5903; these read VTGT…GTTG and TGTT…TTTG. Polar residues-rich tracts occupy residues 5908 to 5918, 6071 to 6103, and 6111 to 6121; these read ITGTNGLSAEM, KTRS…TTKT, and TRPSAGITATT. The segment covering 6156-6168 has biased composition (low complexity); that stretch reads TTTGTTGVTTGTT. Composition is skewed to polar residues over residues 6217 to 6248 and 6257 to 6275; these read EVST…TATT and APGS…SAST. Low complexity predominate over residues 6284 to 6295; the sequence is TGSTRGVRTTGS. Composition is skewed to polar residues over residues 6303-6323 and 6336-6346; these read GEFS…TTLT and ESTTSLPQSAK. The span at 6378–6389 shows a compositional bias: low complexity; the sequence is SGTTISSGGSHT. 2 stretches are compositionally biased toward polar residues: residues 6440–6457 and 6470–6503; these read GRAT…TSQA and TTIT…TTYI. A compositionally biased stretch (low complexity) spans 6507–6523; that stretch reads GTTRGGLATATTGAFSG. The segment covering 6560-6571 has biased composition (polar residues); sequence TTFTSGGSHTEA. Positions 6581 to 6597 are enriched in low complexity; that stretch reads TGTESRAATTRAAPGTT. A compositionally biased stretch (polar residues) spans 6599–6608; the sequence is VPGSSNTGAT. Low complexity predominate over residues 6612–6628; sequence GGSATTRGRITTATTGA. 2 stretches are compositionally biased toward polar residues: residues 6669–6680 and 6689–6698; these read RITSGGSYTATT and APGSSNTGAT. The span at 6707–6718 shows a compositional bias: low complexity; it reads TRGRITTATTGA. A compositionally biased stretch (polar residues) spans 6752 to 6766; it reads TTLTGDRSSTGSESR. A compositionally biased stretch (low complexity) spans 6767–6781; sequence TATTGVAPGTTVAPG. Polar residues predominate over residues 6794–6817; it reads SGTTNIGRATGATTSIVGSDTSQA. Low complexity predominate over residues 6827–6842; the sequence is SPGASSTSQSSRPGTS. A compositionally biased stretch (polar residues) spans 6843–6875; the sequence is VTPDSSASESETVTTKEFSGTTAISRTSHTGTP. A compositionally biased stretch (low complexity) spans 6887-6901; the sequence is TATTGVAPGTTVAPG. Polar residues-rich tracts occupy residues 6902–6911 and 6953–6964; these read SSNTEATTSV and GTSEVAPSTTVA. The span at 6966–6994 shows a compositional bias: low complexity; sequence GSFSTAATTSPGASGTTGVTTTTKTTTSL. A compositionally biased stretch (polar residues) spans 7006–7041; it reads SATTGAPGSRTGTAGVPSATTVSPGSSNSEATTSVG. Positions 7045–7074 are enriched in low complexity; the sequence is KTGAETITEATTSTEGTGTSGTGFKTGTSE. The segment covering 7085–7094 has biased composition (polar residues); sequence SFSTAATTSP. The segment covering 7095 to 7112 has biased composition (low complexity); sequence GASGMTGVTTTTKTTTSL. A compositionally biased stretch (polar residues) spans 7143-7158; it reads TRVTPGSSNSEATTSV. Low complexity-rich tracts occupy residues 7201-7215 and 7250-7276; these read SGSS…TEGT and SFST…TTSL. Residues 7293-7311 show a composition bias toward polar residues; it reads SGTTVAPGSSNSEATTSVG. Low complexity predominate over residues 7379–7397; sequence TTSTKGTGTSGTGFKTGTS. The span at 7403–7421 shows a compositional bias: polar residues; that stretch reads TTVSPGSFSTATISPGASR. Residues 7422–7435 are compositionally biased toward low complexity; it reads TTGAAPAAETTTSL. A compositionally biased stretch (polar residues) spans 7465 to 7483; it reads SATTIAPGSSNSEATTSLG. Over residues 7525-7537 the composition is skewed to gly residues; that stretch reads PLGGASGTSGGYV. 2 stretches are compositionally biased toward polar residues: residues 7544 to 7557 and 7571 to 7596; these read PTTS…SRTI and AGTS…TSPG. The segment covering 7600 to 7613 has biased composition (low complexity); that stretch reads MTGVRTTSKTTTSL. Composition is skewed to polar residues over residues 7642–7669 and 7698–7708; these read SSRT…SGTG and SFSTAATTSPG. Positions 7715-7732 are enriched in low complexity; that stretch reads TGPTAETTTFLGGSSTTG. The segment covering 7783–7811 has biased composition (polar residues); the sequence is KNGSMTTALGSQLSSSQTVIPGSSGTISH. The segment covering 7812-7828 has biased composition (low complexity); sequence TTVAPGSSVTGTTTGAS. A compositionally biased stretch (polar residues) spans 7830–7851; that stretch reads DQVTGSKTGTTGVALSTTVAPG. Over residues 7852-7861 the composition is skewed to low complexity; that stretch reads SSSTEATTST. A compositionally biased stretch (polar residues) spans 7862–7891; that stretch reads GVHRTTVVGQKTGATTRGSAKQGTRSTIEA. Residues 7892–7917 are compositionally biased toward low complexity; the sequence is TTSFRGTGTTGSGMNTGTTGVVSGNT. Residues 7918-7934 show a composition bias toward polar residues; that stretch reads ISPSSFNTEATSGTSER. Over residues 7938–7952 the composition is skewed to low complexity; it reads GSEIGTTGIVSGTTV. Composition is skewed to polar residues over residues 7953-7965, 8020-8040, 8048-8081, and 8110-8120; these read APGS…TTSL, SGRS…SGTT, TGNT…SISG, and ETGVQTGSTLV. Residues 8159–8225 enclose the VWFC domain; that stretch reads PVCHGPLGEE…DTCCEIGYCE (67 aa). 4 cysteine pairs are disulfide-bonded: cysteine 8288-cysteine 8339, cysteine 8306-cysteine 8353, cysteine 8315-cysteine 8369, and cysteine 8319-cysteine 8371. The region spanning 8288 to 8376 is the CTCK domain; the sequence is CKNNCRSSLV…TTCSCLDICQ (89 aa).

As to expression, expressed corneal epithelial cells, conjunctival goblet and epithelial cells and lacrimal gland cells (at protein level). Expressed by mucous cells of the submandibular gland and submucosal gland of the trachea. Expressed by middle ear epithelial cells.

It localises to the secreted. In terms of biological role, may function in ocular mucus homeostasis. The sequence is that of Mucin-19 (MUC19) from Homo sapiens (Human).